A 273-amino-acid polypeptide reads, in one-letter code: Ribosomal RNA small subunit methyltransferase A (273 aa).

Asparagine 18, leucine 20, glycine 45, glutamate 66, aspartate 91, and asparagine 113 together coordinate S-adenosyl-L-methionine.

Belongs to the class I-like SAM-binding methyltransferase superfamily. rRNA adenine N(6)-methyltransferase family. RsmA subfamily.

It is found in the cytoplasm. It catalyses the reaction adenosine(1518)/adenosine(1519) in 16S rRNA + 4 S-adenosyl-L-methionine = N(6)-dimethyladenosine(1518)/N(6)-dimethyladenosine(1519) in 16S rRNA + 4 S-adenosyl-L-homocysteine + 4 H(+). Its function is as follows. Specifically dimethylates two adjacent adenosines (A1518 and A1519) in the loop of a conserved hairpin near the 3'-end of 16S rRNA in the 30S particle. May play a critical role in biogenesis of 30S subunits. The protein is Ribosomal RNA small subunit methyltransferase A of Escherichia coli O139:H28 (strain E24377A / ETEC).